The following is a 311-amino-acid chain: Protease HtpX homolog 1 (311 aa).

2 consecutive transmembrane segments (helical) span residues 12–32 (VISLGLTIISEGIVLIGIASL) and 35–55 (ISLFFIFPALVIFWLFQWIIS). A Zn(2+)-binding site is contributed by H137. The active site involves E138. Zn(2+) is bound at residue H141. The next 2 membrane-spanning stretches (helical) occupy residues 159 to 179 (VLGYISTLLMNFGYLALFLAA) and 184 to 204 (LLFAIAALAIGFVIFVVTFIL). Residue E216 participates in Zn(2+) binding.

The protein belongs to the peptidase M48B family. It depends on Zn(2+) as a cofactor.

It is found in the cell membrane. The protein is Protease HtpX homolog 1 of Saccharolobus solfataricus (strain ATCC 35092 / DSM 1617 / JCM 11322 / P2) (Sulfolobus solfataricus).